Reading from the N-terminus, the 49-residue chain is DNA-directed RNA polymerase subunit Rpo12 (49 aa).

3 residues coordinate Zn(2+): cysteine 11, cysteine 27, and cysteine 30.

The protein belongs to the archaeal Rpo12/eukaryotic RPC10 RNA polymerase subunit family. In terms of assembly, part of the RNA polymerase complex. Requires Zn(2+) as cofactor.

It is found in the cytoplasm. It carries out the reaction RNA(n) + a ribonucleoside 5'-triphosphate = RNA(n+1) + diphosphate. In terms of biological role, DNA-dependent RNA polymerase (RNAP) catalyzes the transcription of DNA into RNA using the four ribonucleoside triphosphates as substrates. The protein is DNA-directed RNA polymerase subunit Rpo12 of Pyrococcus abyssi (strain GE5 / Orsay).